A 102-amino-acid polypeptide reads, in one-letter code: Small ribosomal subunit protein uS10 (102 aa).

It belongs to the universal ribosomal protein uS10 family. In terms of assembly, part of the 30S ribosomal subunit.

Functionally, involved in the binding of tRNA to the ribosomes. This chain is Small ribosomal subunit protein uS10, found in Caldanaerobacter subterraneus subsp. tengcongensis (strain DSM 15242 / JCM 11007 / NBRC 100824 / MB4) (Thermoanaerobacter tengcongensis).